The primary structure comprises 295 residues: Elongation factor Ts (295 aa).

The interval 79–82 (TDFV) is involved in Mg(2+) ion dislocation from EF-Tu.

This sequence belongs to the EF-Ts family.

It localises to the cytoplasm. In terms of biological role, associates with the EF-Tu.GDP complex and induces the exchange of GDP to GTP. It remains bound to the aminoacyl-tRNA.EF-Tu.GTP complex up to the GTP hydrolysis stage on the ribosome. In Bacillus cereus (strain ATCC 10987 / NRS 248), this protein is Elongation factor Ts.